A 353-amino-acid polypeptide reads, in one-letter code: Phospho-N-acetylmuramoyl-pentapeptide-transferase (353 aa).

The next 10 helical transmembrane spans lie at 22 to 42, 65 to 85, 88 to 108, 129 to 149, 161 to 181, 192 to 212, 228 to 248, 256 to 276, 281 to 301, and 330 to 350; these read FAFF…ITWA, TPTM…LFCI, DNIF…IGLI, LLAQ…SSEL, PLFD…ISSS, GLAT…LYLS, GLGE…GFLW, VFMG…LAII, ILLL…ILQV, and KIIV…LASI.

This sequence belongs to the glycosyltransferase 4 family. MraY subfamily. Requires Mg(2+) as cofactor.

Its subcellular location is the cell inner membrane. It catalyses the reaction UDP-N-acetyl-alpha-D-muramoyl-L-alanyl-gamma-D-glutamyl-meso-2,6-diaminopimeloyl-D-alanyl-D-alanine + di-trans,octa-cis-undecaprenyl phosphate = di-trans,octa-cis-undecaprenyl diphospho-N-acetyl-alpha-D-muramoyl-L-alanyl-D-glutamyl-meso-2,6-diaminopimeloyl-D-alanyl-D-alanine + UMP. Its pathway is cell wall biogenesis; peptidoglycan biosynthesis. Functionally, catalyzes the initial step of the lipid cycle reactions in the biosynthesis of the cell wall peptidoglycan: transfers peptidoglycan precursor phospho-MurNAc-pentapeptide from UDP-MurNAc-pentapeptide onto the lipid carrier undecaprenyl phosphate, yielding undecaprenyl-pyrophosphoryl-MurNAc-pentapeptide, known as lipid I. This is Phospho-N-acetylmuramoyl-pentapeptide-transferase from Campylobacter jejuni (strain RM1221).